The following is a 352-amino-acid chain: Lipid storage droplets surface-binding protein 2 (352 aa).

2 disordered regions span residues methionine 1–lysine 28 and asparagine 298–glutamine 352. Polar residues predominate over residues asparagine 298 to alanine 309. Residues threonine 315 to serine 329 show a composition bias toward low complexity.

Belongs to the perilipin family. Ubiquitous expression in early embryos. At stage 5 expression is restricted to the pole cells. At stage 11 expression is seen in the amnioserosa, refined to the fat body and midgut by stage 14. Also seen in the hindgut by the end of embryogenesis. Expression is seen in larval fat body (at protein level).

The protein resides in the cytoplasm. It localises to the lipid droplet. Its function is as follows. Essential for embryogenesis. Required for normal deposition of neutral lipids in the oocyte. This Drosophila melanogaster (Fruit fly) protein is Lipid storage droplets surface-binding protein 2.